Consider the following 451-residue polypeptide: Phosphoglucosamine mutase (451 aa).

Serine 107 functions as the Phosphoserine intermediate in the catalytic mechanism. 4 residues coordinate Mg(2+): serine 107, aspartate 246, aspartate 248, and aspartate 250. A Phosphoserine modification is found at serine 107.

The protein belongs to the phosphohexose mutase family. The cofactor is Mg(2+). Activated by phosphorylation.

The catalysed reaction is alpha-D-glucosamine 1-phosphate = D-glucosamine 6-phosphate. Its function is as follows. Catalyzes the conversion of glucosamine-6-phosphate to glucosamine-1-phosphate. In Burkholderia lata (strain ATCC 17760 / DSM 23089 / LMG 22485 / NCIMB 9086 / R18194 / 383), this protein is Phosphoglucosamine mutase.